A 128-amino-acid chain; its full sequence is Sulfurtransferase TusD (128 aa).

Cysteine 78 serves as the catalytic Cysteine persulfide intermediate.

The protein belongs to the DsrE/TusD family. In terms of assembly, heterohexamer, formed by a dimer of trimers. The hexameric TusBCD complex contains 2 copies each of TusB, TusC and TusD. The TusBCD complex interacts with TusE.

The protein localises to the cytoplasm. Its function is as follows. Part of a sulfur-relay system required for 2-thiolation of 5-methylaminomethyl-2-thiouridine (mnm(5)s(2)U) at tRNA wobble positions. Accepts sulfur from TusA and transfers it in turn to TusE. The sequence is that of Sulfurtransferase TusD from Erwinia tasmaniensis (strain DSM 17950 / CFBP 7177 / CIP 109463 / NCPPB 4357 / Et1/99).